Reading from the N-terminus, the 119-residue chain is Probable non-functional T cell receptor gamma variable 11 (119 aa).

A signal peptide spans 1–18; it reads MPLVVAVIFFSLWVFALG. The region spanning 23–119 is the Ig-like domain; sequence PEISISRPAN…VYHCACWIRH (97 aa). An N-linked (GlcNAc...) asparagine glycan is attached at Asn32.

Most probably, the gamma-delta TR is not assembled due to incorrect folding of the gamma chain. Gamma-delta TR is a heterodimer composed of a gamma and delta chain; disulfide-linked. The gamma-delta TR is associated with the transmembrane signaling CD3 coreceptor proteins following the stoichiometry: a single gamma-delta TR heterodimer associates with one CD3D-CD3E heterodimer, one CD3G-CD3E heterodimer and one CD247 homodimer forming a stable octameric structure. Upon activation, gamma-delta TR complex associates with FCER1G to initiate intracellular signaling.

Its subcellular location is the cell membrane. Probable non-functional open reading frame (ORF) of V region of the variable domain of T cell receptor (TR) gamma chain. Non-functional ORF generally cannot participate in the synthesis of a productive T cell receptor (TR) chain due to altered V-(D)-J or switch recombination and/or splicing site (at mRNA level) and/or conserved amino acid change (protein level). Gamma-delta TRs recognize a variety of self and foreign non-peptide antigens frequently expressed at the epithelial boundaries between the host and external environment, including endogenous lipids presented by MH-like protein CD1D and phosphoantigens presented by butyrophilin-like molecule BTN3A1. Upon antigen recognition induces rapid, innate-like immune responses involved in pathogen clearance and tissue repair. Binding of gamma-delta TR complex to antigen triggers phosphorylation of immunoreceptor tyrosine-based activation motifs (ITAMs) in the CD3 chains by the LCK and FYN kinases, allowing the recruitment, phosphorylation, and activation of ZAP70 that facilitates phosphorylation of the scaffolding proteins LCP2 and LAT. This lead to the formation of a supramolecular signalosome that recruits the phospholipase PLCG1, resulting in calcium mobilization and ERK activation, ultimately leading to T cell expansion and differentiation into effector cells. Gamma-delta TRs are produced through somatic rearrangement of a limited repertoire of variable (V), diversity (D), and joining (J) genes. The potential diversity of gamma-delta TRs is conferred by the unique ability to rearrange (D) genes in tandem and to utilize all three reading frames. The combinatorial diversity is considerably increased by the sequence exonuclease trimming and random nucleotide (N) region additions which occur during the V-(D)-J rearrangements. The sequence is that of Probable non-functional T cell receptor gamma variable 11 from Homo sapiens (Human).